The chain runs to 411 residues: Chorismate synthase (411 aa).

The NADP(+) site is built by Arg-40 and Arg-46. FMN is bound by residues 135-137 and 256-257; these read RAS and QA. Positions 278–299 are disordered; sequence HDGIARGADGRPRRTSDRAGGI. The segment covering 285-294 has biased composition (basic and acidic residues); it reads ADGRPRRTSD. FMN contacts are provided by residues Ala-301, 316–320, and Arg-342; that span reads KPIAT.

Belongs to the chorismate synthase family. Homotetramer. It depends on FMNH2 as a cofactor.

It carries out the reaction 5-O-(1-carboxyvinyl)-3-phosphoshikimate = chorismate + phosphate. It functions in the pathway metabolic intermediate biosynthesis; chorismate biosynthesis; chorismate from D-erythrose 4-phosphate and phosphoenolpyruvate: step 7/7. Catalyzes the anti-1,4-elimination of the C-3 phosphate and the C-6 proR hydrogen from 5-enolpyruvylshikimate-3-phosphate (EPSP) to yield chorismate, which is the branch point compound that serves as the starting substrate for the three terminal pathways of aromatic amino acid biosynthesis. This reaction introduces a second double bond into the aromatic ring system. This Micrococcus luteus (strain ATCC 4698 / DSM 20030 / JCM 1464 / CCM 169 / CCUG 5858 / IAM 1056 / NBRC 3333 / NCIMB 9278 / NCTC 2665 / VKM Ac-2230) (Micrococcus lysodeikticus) protein is Chorismate synthase.